We begin with the raw amino-acid sequence, 225 residues long: Adenylate kinase (225 aa).

ATP is bound at residue 10 to 15 (GSGKGT). The tract at residues 30–59 (ESGAIFRENISKGTEIGKKAKEYIDRGDLV) is NMP. Residues serine 31, arginine 36, 57–59 (DLV), 85–88 (GFPR), and glutamine 92 contribute to the AMP site. Positions 126–165 (GRRLCENDNNHPNNIFIDAIKPDGDKCRVCGGALSARSDD) are LID. Arginine 127 provides a ligand contact to ATP. AMP-binding residues include arginine 162 and arginine 174. Proline 211 is a binding site for ATP.

Belongs to the adenylate kinase family. As to quaternary structure, monomer.

It is found in the cytoplasm. The enzyme catalyses AMP + ATP = 2 ADP. It participates in purine metabolism; AMP biosynthesis via salvage pathway; AMP from ADP: step 1/1. In terms of biological role, catalyzes the reversible transfer of the terminal phosphate group between ATP and AMP. Plays an important role in cellular energy homeostasis and in adenine nucleotide metabolism. The protein is Adenylate kinase of Desulfatibacillum aliphaticivorans.